The following is a 338-amino-acid chain: NADPH dehydrogenase (338 aa).

22 to 25 (SPMC) lines the FMN pocket. Tyr-27 is a binding site for substrate. Residues Ala-59 and Gln-101 each contribute to the FMN site. Position 163 to 166 (163 to 166 (HAAH)) interacts with substrate. Residues Arg-214 and 306 to 307 (GR) contribute to the FMN site.

Belongs to the NADH:flavin oxidoreductase/NADH oxidase family. NamA subfamily. In terms of assembly, homotetramer. Requires FMN as cofactor.

It carries out the reaction A + NADPH + H(+) = AH2 + NADP(+). Functionally, catalyzes the reduction of the double bond of an array of alpha,beta-unsaturated aldehydes and ketones. It also reduces the nitro group of nitroester and nitroaromatic compounds. It could have a role in detoxification processes. In Listeria welshimeri serovar 6b (strain ATCC 35897 / DSM 20650 / CCUG 15529 / CIP 8149 / NCTC 11857 / SLCC 5334 / V8), this protein is NADPH dehydrogenase.